The sequence spans 200 residues: Prolactin (200 aa).

Cystine bridges form between cysteine 4–cysteine 11, cysteine 59–cysteine 175, and cysteine 192–cysteine 200.

It belongs to the somatotropin/prolactin family. In terms of tissue distribution, pituitary gland.

The protein localises to the secreted. The protein is Prolactin (prl) of Protopterus aethiopicus (Marbled lungfish).